Consider the following 718-residue polypeptide: Catalase-peroxidase (718 aa).

Positions 98–219 (WHAAGTYRMG…LAATEMGLIY (122 aa)) form a cross-link, tryptophyl-tyrosyl-methioninium (Trp-Tyr) (with M-245). The active-site Proton acceptor is His99. Positions 219–245 (YVNPEGPQASGDPRSAAPFIRATFGNM) form a cross-link, tryptophyl-tyrosyl-methioninium (Tyr-Met) (with W-98). His260 is a heme b binding site.

This sequence belongs to the peroxidase family. Peroxidase/catalase subfamily. Homodimer or homotetramer. The cofactor is heme b. In terms of processing, formation of the three residue Trp-Tyr-Met cross-link is important for the catalase, but not the peroxidase activity of the enzyme.

It carries out the reaction H2O2 + AH2 = A + 2 H2O. The catalysed reaction is 2 H2O2 = O2 + 2 H2O. Functionally, bifunctional enzyme with both catalase and broad-spectrum peroxidase activity. This is Catalase-peroxidase from Acinetobacter baumannii (strain ATCC 17978 / DSM 105126 / CIP 53.77 / LMG 1025 / NCDC KC755 / 5377).